The primary structure comprises 196 residues: Protein GrpE (196 aa).

Residues methionine 1–threonine 24 are disordered.

Belongs to the GrpE family. In terms of assembly, homodimer.

The protein resides in the cytoplasm. Its function is as follows. Participates actively in the response to hyperosmotic and heat shock by preventing the aggregation of stress-denatured proteins, in association with DnaK and GrpE. It is the nucleotide exchange factor for DnaK and may function as a thermosensor. Unfolded proteins bind initially to DnaJ; upon interaction with the DnaJ-bound protein, DnaK hydrolyzes its bound ATP, resulting in the formation of a stable complex. GrpE releases ADP from DnaK; ATP binding to DnaK triggers the release of the substrate protein, thus completing the reaction cycle. Several rounds of ATP-dependent interactions between DnaJ, DnaK and GrpE are required for fully efficient folding. The sequence is that of Protein GrpE from Gloeobacter violaceus (strain ATCC 29082 / PCC 7421).